A 399-amino-acid polypeptide reads, in one-letter code: Insertion element IS900 uncharacterized 42 kDa protein (399 aa).

It belongs to the transposase IS1111A/IS1328/IS1533 family.

The polypeptide is Insertion element IS900 uncharacterized 42 kDa protein (Mycobacterium paratuberculosis).